A 270-amino-acid polypeptide reads, in one-letter code: tRNA pseudouridine synthase A (270 aa).

Asp55 functions as the Nucleophile in the catalytic mechanism. Position 110 (Tyr110) interacts with substrate.

The protein belongs to the tRNA pseudouridine synthase TruA family.

The enzyme catalyses uridine(38/39/40) in tRNA = pseudouridine(38/39/40) in tRNA. Formation of pseudouridine at positions 38, 39 and 40 in the anticodon stem and loop of transfer RNAs. The protein is tRNA pseudouridine synthase A of Methanoculleus marisnigri (strain ATCC 35101 / DSM 1498 / JR1).